Consider the following 1905-residue polypeptide: von Willebrand factor A domain-containing protein 8 (1905 aa).

The transit peptide at 1–45 (MQSRLLLLGAPGGLGDVASRRVRLLLRQVLRGRPGGDQQRLEVRL) directs the protein to the mitochondrion. An interaction with PEX7 region spans residues 1 to 260 (MQSRLLLLGA…PLDPPLRSRF (260 aa)). 446–453 (GGKGCGKT) provides a ligand contact to ATP. Residues 1541–1560 (ERDSNEDVSDPKHGKEDPDN) show a composition bias toward basic and acidic residues. A disordered region spans residues 1541-1583 (ERDSNEDVSDPKHGKEDPDNMPHVGGNTWAGGTGGRDTAGLGG). Residues 1568-1583 (TWAGGTGGRDTAGLGG) are compositionally biased toward gly residues. The 183-residue stretch at 1714–1896 (RLRLVVDVSG…KKIPQILQQI (183 aa)) folds into the VWFA domain.

As to quaternary structure, monomer. Interacts with PEX7. Interacts with PEX5 in a PEX7-dependent manner. Isoform 1 is predominantly expressed in liver, kidney, pancreas, heart, and skeletal muscle (at protein level).

The protein resides in the mitochondrion. Its function is as follows. Exhibits ATPase activity in vitro. This Mus musculus (Mouse) protein is von Willebrand factor A domain-containing protein 8 (Vwa8).